Here is a 538-residue protein sequence, read N- to C-terminus: AAA ATPase forming ring-shaped complexes (538 aa).

The stretch at 14–54 (ARELRLANHRLGAQNEKLTEALKASREKLAEINSRLADMAE) forms a coiled coil. 240 to 245 (GNGKTL) lines the ATP pocket.

Belongs to the AAA ATPase family. Homohexamer. Assembles into a hexameric ring structure.

The protein is AAA ATPase forming ring-shaped complexes of Corynebacterium urealyticum (strain ATCC 43042 / DSM 7109).